The following is a 158-amino-acid chain: Transcription elongation factor GreA (158 aa).

This sequence belongs to the GreA/GreB family.

Functionally, necessary for efficient RNA polymerase transcription elongation past template-encoded arresting sites. The arresting sites in DNA have the property of trapping a certain fraction of elongating RNA polymerases that pass through, resulting in locked ternary complexes. Cleavage of the nascent transcript by cleavage factors such as GreA or GreB allows the resumption of elongation from the new 3'terminus. GreA releases sequences of 2 to 3 nucleotides. The polypeptide is Transcription elongation factor GreA (Verminephrobacter eiseniae (strain EF01-2)).